Here is a 988-residue protein sequence, read N- to C-terminus: Vacuolar sorting protein 18 (988 aa).

Residues 589 to 749 (NKNLNPRRLI…VVKQEKGAKR (161 aa)) form a CHCR repeat. A coiled-coil region spans residues 785–819 (KEAICSSLEDYNKQIEQLKEEMNDATRGADNIRND). The RING-type; degenerate zinc finger occupies 836–886 (CGVCKRKILMMSGDFRMAQGYSSAGPLAPFYVFPCGHSFHAQCLITHVTSC).

It belongs to the VPS18 family. Core component of at least two putative endosomal tethering complexes, the homotypic fusion and vacuole protein sorting (HOPS) complex and the class C core vacuole/endosome tethering (CORVET) complex. Their common core is composed of the class C Vps proteins VPS11, VCL1, VPS18 and VPS33, which in HOPS further associates with VPS39 and VPS41 and in CORVET with VPS3.

The protein resides in the endosome membrane. It localises to the vacuole membrane. Its subcellular location is the cytoplasm. Its function is as follows. Essential protein required during embryogenesis. Believed to act as a core component of the putative HOPS endosomal tethering complex and of the class C core vacuole/endosome tethering (CORVET) complex. CORVET is required for vacuolar transport of SYP22. HOPS is required for the central vacuole formation. Involved in root development. Plays a role in vesicle-mediated protein trafficking to lysosomal compartments including the endocytic membrane transport pathways. The protein is Vacuolar sorting protein 18 of Arabidopsis thaliana (Mouse-ear cress).